The chain runs to 597 residues: Glutamine--fructose-6-phosphate aminotransferase [isomerizing] (597 aa).

Cys-2 functions as the Nucleophile; for GATase activity in the catalytic mechanism. One can recognise a Glutamine amidotransferase type-2 domain in the interval 2–218 (CGIVGYIGDS…ENSVGQISLE (217 aa)). 2 consecutive SIS domains span residues 276–416 (IDPE…QLGT) and 449–587 (LSKR…VDHP). Lys-592 (for Fru-6P isomerization activity) is an active-site residue.

Homodimer.

It is found in the cytoplasm. It carries out the reaction D-fructose 6-phosphate + L-glutamine = D-glucosamine 6-phosphate + L-glutamate. In terms of biological role, catalyzes the first step in hexosamine metabolism, converting fructose-6P into glucosamine-6P using glutamine as a nitrogen source. This Helicobacter pylori (strain J99 / ATCC 700824) (Campylobacter pylori J99) protein is Glutamine--fructose-6-phosphate aminotransferase [isomerizing].